Consider the following 213-residue polypeptide: Isopentenyl-diphosphate Delta-isomerase (213 aa).

Residues 1–10 (MRDSMSEADR) show a composition bias toward basic and acidic residues. Positions 1-34 (MRDSMSEADRSSPGSGKTDREDETAENATQDVIA) are disordered. Mn(2+)-binding residues include His51, His58, and His95. Residues 56-193 (VRHRAFTCLL…RQLRLCPWFE (138 aa)) form the Nudix hydrolase domain. Residue Glu113 participates in Mg(2+) binding. Residues Glu142 and Glu144 each contribute to the Mn(2+) site. Residue Glu144 is part of the active site.

The protein belongs to the IPP isomerase type 1 family. Requires Mg(2+) as cofactor. It depends on Mn(2+) as a cofactor.

The protein resides in the cytoplasm. The catalysed reaction is isopentenyl diphosphate = dimethylallyl diphosphate. The protein operates within isoprenoid biosynthesis; dimethylallyl diphosphate biosynthesis; dimethylallyl diphosphate from isopentenyl diphosphate: step 1/1. Its function is as follows. Catalyzes the 1,3-allylic rearrangement of the homoallylic substrate isopentenyl (IPP) to its highly electrophilic allylic isomer, dimethylallyl diphosphate (DMAPP). The protein is Isopentenyl-diphosphate Delta-isomerase of Halobacterium salinarum (strain ATCC 700922 / JCM 11081 / NRC-1) (Halobacterium halobium).